The primary structure comprises 294 residues: tRNA pseudouridine synthase B (294 aa).

The active-site Nucleophile is the D38.

Belongs to the pseudouridine synthase TruB family. Type 1 subfamily.

The catalysed reaction is uridine(55) in tRNA = pseudouridine(55) in tRNA. Responsible for synthesis of pseudouridine from uracil-55 in the psi GC loop of transfer RNAs. This chain is tRNA pseudouridine synthase B, found in Clostridium perfringens (strain 13 / Type A).